We begin with the raw amino-acid sequence, 84 residues long: Toxin BmKaTx16 (84 aa).

The N-terminal stretch at 1 to 19 is a signal peptide; that stretch reads MNYLVMISFALLLMTGVES. Positions 21–83 constitute an LCN-type CS-alpha/beta domain; sequence RDAYIAKPHN…VPIRVPGKCH (63 aa). 4 disulfides stabilise this stretch: Cys-31/Cys-82, Cys-35/Cys-55, Cys-41/Cys-65, and Cys-45/Cys-67. Arg-84 is a propeptide (removed by a carboxypeptidase).

This sequence belongs to the long (4 C-C) scorpion toxin superfamily. Sodium channel inhibitor family. Alpha subfamily. In terms of tissue distribution, expressed by the venom gland.

The protein localises to the secreted. Its function is as follows. Alpha toxins bind voltage-independently at site-3 of sodium channels (Nav) and inhibit the inactivation of the activated channels, thereby blocking neuronal transmission. The sequence is that of Toxin BmKaTx16 from Olivierus martensii (Manchurian scorpion).